Here is a 124-residue protein sequence, read N- to C-terminus: ATP synthase epsilon chain (124 aa).

This sequence belongs to the ATPase epsilon chain family. In terms of assembly, F-type ATPases have 2 components, CF(1) - the catalytic core - and CF(0) - the membrane proton channel. CF(1) has five subunits: alpha(3), beta(3), gamma(1), delta(1), epsilon(1). CF(0) has three main subunits: a, b and c.

It is found in the cell membrane. Functionally, produces ATP from ADP in the presence of a proton gradient across the membrane. This Streptomyces griseus subsp. griseus (strain JCM 4626 / CBS 651.72 / NBRC 13350 / KCC S-0626 / ISP 5235) protein is ATP synthase epsilon chain.